Reading from the N-terminus, the 137-residue chain is Small ribosomal subunit protein uS9 (137 aa).

A compositionally biased stretch (basic and acidic residues) spans 105-117; it reads LKIEGHLSRDPRA. Residues 105–137 form a disordered region; sequence LKIEGHLSRDPRAKERRKYGLKKARKAPQFSKR. Residues 118–137 are compositionally biased toward basic residues; the sequence is KERRKYGLKKARKAPQFSKR.

The protein belongs to the universal ribosomal protein uS9 family.

This chain is Small ribosomal subunit protein uS9, found in Prochlorococcus marinus (strain MIT 9211).